The chain runs to 321 residues: Lipoyl synthase (321 aa).

The [4Fe-4S] cluster site is built by Cys68, Cys73, Cys79, Cys94, Cys98, Cys101, and Ser308. Positions 80 to 297 constitute a Radical SAM core domain; the sequence is FNHGTATFMI…KEEAMAMGFT (218 aa).

It belongs to the radical SAM superfamily. Lipoyl synthase family. The cofactor is [4Fe-4S] cluster.

It is found in the cytoplasm. It catalyses the reaction [[Fe-S] cluster scaffold protein carrying a second [4Fe-4S](2+) cluster] + N(6)-octanoyl-L-lysyl-[protein] + 2 oxidized [2Fe-2S]-[ferredoxin] + 2 S-adenosyl-L-methionine + 4 H(+) = [[Fe-S] cluster scaffold protein] + N(6)-[(R)-dihydrolipoyl]-L-lysyl-[protein] + 4 Fe(3+) + 2 hydrogen sulfide + 2 5'-deoxyadenosine + 2 L-methionine + 2 reduced [2Fe-2S]-[ferredoxin]. It participates in protein modification; protein lipoylation via endogenous pathway; protein N(6)-(lipoyl)lysine from octanoyl-[acyl-carrier-protein]: step 2/2. In terms of biological role, catalyzes the radical-mediated insertion of two sulfur atoms into the C-6 and C-8 positions of the octanoyl moiety bound to the lipoyl domains of lipoate-dependent enzymes, thereby converting the octanoylated domains into lipoylated derivatives. The sequence is that of Lipoyl synthase from Serratia proteamaculans (strain 568).